The sequence spans 148 residues: MKKIFLTMTPLPYMNHLPENHYFLSLTVVISIIHLFTTCVPQHNHSTHFPYLNHARHLNHVLHPSHARHPNHVLHLNRVLHPNRVVHLNHVLHLNHVLHLNHVLHLNHVLHPNHVLHLNPILHPNHYLVSRYYPISRHYLHKIFRLFM.

Residues 22–40 (YFLSLTVVISIIHLFTTCV) traverse the membrane as a helical segment. The histidine-rich stretch occupies residues 43–141 (HNHSTHFPYL…YYPISRHYLH (99 aa)).

It localises to the host membrane. This is an uncharacterized protein from African swine fever virus (strain Badajoz 1971 Vero-adapted) (Ba71V).